Consider the following 342-residue polypeptide: S-adenosylmethionine:tRNA ribosyltransferase-isomerase (342 aa).

Belongs to the QueA family. Monomer.

The protein resides in the cytoplasm. It carries out the reaction 7-aminomethyl-7-carbaguanosine(34) in tRNA + S-adenosyl-L-methionine = epoxyqueuosine(34) in tRNA + adenine + L-methionine + 2 H(+). It functions in the pathway tRNA modification; tRNA-queuosine biosynthesis. Its function is as follows. Transfers and isomerizes the ribose moiety from AdoMet to the 7-aminomethyl group of 7-deazaguanine (preQ1-tRNA) to give epoxyqueuosine (oQ-tRNA). The polypeptide is S-adenosylmethionine:tRNA ribosyltransferase-isomerase (Streptococcus pyogenes serotype M49 (strain NZ131)).